The chain runs to 177 residues: F(420)H(2) dehydrogenase subunit I (177 aa).

Residues 1–21 (MGCPEVQDRPGSGYELEETPA) are disordered. 4Fe-4S ferredoxin-type domains follow at residues 76 to 105 (GLQTLDKSKCIGCGICANTCPNSAIKIVKA) and 116 to 145 (WFPQIDIGHCLFCGLCIDQCPKGALSSGKE). [4Fe-4S] cluster is bound by residues Cys-85, Cys-88, Cys-91, Cys-95, Cys-125, Cys-128, Cys-131, and Cys-135.

It belongs to the complex I 23 kDa subunit family. As to quaternary structure, the FPO complex is composed of at least 13 different subunits. It depends on [4Fe-4S] cluster as a cofactor.

It catalyses the reaction methanophenazine + reduced coenzyme F420-(gamma-L-Glu)(n) = dihydromethanophenazine + oxidized coenzyme F420-(gamma-L-Glu)(n) + H(+). In terms of biological role, component of the F(420)H(2) dehydrogenase (FPO complex) which is part of the energy-conserving F(420)H(2):heterodisulfide oxidoreductase system. The membrane-bound electron transfer system of the complex plays an important role in the metabolism of methylotrophic methanogens when the organisms grow on methanol or methylamines. Catalyzes the oxidation of methanophenazine to dihydromethanophenazine. It shuttles electrons from F(420)H(2), via FAD and iron-sulfur (Fe-S) centers, to methanophenazine (an electron carrier in the membrane). It couples the redox reaction to proton translocation (for every two electrons transferred, two hydrogen ions are translocated across the cytoplasmic membrane), and thus conserves the redox energy in a proton gradient. It also catalyzes the oxidation of F(420)H(2) with quinones such as 2,3-dimethyl-1,4-naphthoquinone, 2-methyl-1,4-naphthoquinone and tetramethyl-p-benzoquinone. In Methanosarcina mazei (strain ATCC BAA-159 / DSM 3647 / Goe1 / Go1 / JCM 11833 / OCM 88) (Methanosarcina frisia), this protein is F(420)H(2) dehydrogenase subunit I (fpoI).